The following is a 150-amino-acid chain: D-aminoacyl-tRNA deacylase (150 aa).

Residues 138–139 (GP) carry the Gly-cisPro motif, important for rejection of L-amino acids motif.

This sequence belongs to the DTD family. In terms of assembly, homodimer.

Its subcellular location is the cytoplasm. The enzyme catalyses glycyl-tRNA(Ala) + H2O = tRNA(Ala) + glycine + H(+). It catalyses the reaction a D-aminoacyl-tRNA + H2O = a tRNA + a D-alpha-amino acid + H(+). In terms of biological role, an aminoacyl-tRNA editing enzyme that deacylates mischarged D-aminoacyl-tRNAs. Also deacylates mischarged glycyl-tRNA(Ala), protecting cells against glycine mischarging by AlaRS. Acts via tRNA-based rather than protein-based catalysis; rejects L-amino acids rather than detecting D-amino acids in the active site. By recycling D-aminoacyl-tRNA to D-amino acids and free tRNA molecules, this enzyme counteracts the toxicity associated with the formation of D-aminoacyl-tRNA entities in vivo and helps enforce protein L-homochirality. This Thermosipho melanesiensis (strain DSM 12029 / CIP 104789 / BI429) protein is D-aminoacyl-tRNA deacylase.